A 258-amino-acid polypeptide reads, in one-letter code: Octanoyltransferase (258 aa).

A BPL/LPL catalytic domain is found at 42-226; sequence NLGADTLLLL…AVVAALDGAL (185 aa). Substrate is bound by residues 80 to 87, 156 to 158, and 169 to 171; these read RGGKITWH, AIG, and GFS. The active-site Acyl-thioester intermediate is the Cys-187.

It belongs to the LipB family.

Its subcellular location is the cytoplasm. It catalyses the reaction octanoyl-[ACP] + L-lysyl-[protein] = N(6)-octanoyl-L-lysyl-[protein] + holo-[ACP] + H(+). The protein operates within protein modification; protein lipoylation via endogenous pathway; protein N(6)-(lipoyl)lysine from octanoyl-[acyl-carrier-protein]: step 1/2. Catalyzes the transfer of endogenously produced octanoic acid from octanoyl-acyl-carrier-protein onto the lipoyl domains of lipoate-dependent enzymes. Lipoyl-ACP can also act as a substrate although octanoyl-ACP is likely to be the physiological substrate. This is Octanoyltransferase from Rhodococcus opacus (strain B4).